The chain runs to 441 residues: Na(+)/H(+) antiporter NhaA 2 (441 aa).

12 helical membrane-spanning segments follow: residues 34-54 (VGGA…NSPW), 77-97 (LTLG…VVGL), 115-135 (ALPM…FVAV), 146-166 (GWAI…AVIS), 176-196 (FLLT…AVFY), 199-219 (EINL…ALCV), 225-245 (SWWL…ESGV), 249-269 (VAGV…AGGP), 290-310 (VAVP…VSGL), 317-337 (PITL…IFLT), 355-375 (WIDV…SLLI), and 389-409 (FVKV…AVLL).

It belongs to the NhaA Na(+)/H(+) (TC 2.A.33) antiporter family.

It localises to the cell membrane. The catalysed reaction is Na(+)(in) + 2 H(+)(out) = Na(+)(out) + 2 H(+)(in). In terms of biological role, na(+)/H(+) antiporter that extrudes sodium in exchange for external protons. The protein is Na(+)/H(+) antiporter NhaA 2 of Mycobacterium sp. (strain MCS).